A 338-amino-acid polypeptide reads, in one-letter code: Serine/threonine-protein kinase YabT (338 aa).

Positions tyrosine 28 to threonine 286 constitute a Protein kinase domain. ATP contacts are provided by residues leucine 34 to valine 42 and lysine 55. The active-site Proton acceptor is the aspartate 148. Positions aspartate 266 to serine 312 are disordered. Positions arginine 289–proline 309 are enriched in basic residues.

This sequence belongs to the protein kinase superfamily. Ser/Thr protein kinase family. Post-translationally, autophosphorylated.

It carries out the reaction L-seryl-[protein] + ATP = O-phospho-L-seryl-[protein] + ADP + H(+). The catalysed reaction is L-threonyl-[protein] + ATP = O-phospho-L-threonyl-[protein] + ADP + H(+). In terms of biological role, plays a role in the cell's commitment to sporulation; phosphorylates DNA replication initiation-control protein YabA. Deletion of this kinase delays entry into sporulation but does not affect final spore yield. Overexpression decreases biofilm formation; phosphorylation of YabA probably prevents biofilm formation. The sequence is that of Serine/threonine-protein kinase YabT (yabT) from Bacillus subtilis (strain 168).